A 236-amino-acid chain; its full sequence is Methylosome subunit pICln (236 aa).

The tract at residues 1-20 (MSFLKSFPPPGPTEGLRHQQ) is disordered. Ser2 carries the post-translational modification N-acetylserine. Phosphoserine occurs at positions 101, 143, 192, 194, 197, and 209. Residue Thr222 is modified to Phosphothreonine.

This sequence belongs to the pICln (TC 1.A.47) family. As to quaternary structure, component of the methylosome, a 20S complex containing at least PRMT5/SKB1, WDR77/MEP50 and CLNS1A/pICln. May mediate SNRPD1 and SNRPD3 methylation. Forms a 6S pICln-Sm complex composed of CLNS1A/pICln, SNRPD1, SNRPD2, SNRPE, SNRPF and SNRPG; ring-like structure where CLNS1A/pICln mimics additional Sm proteins and which is unable to assemble into the core snRNP. Interacts with LSM10 and LSM11. In terms of tissue distribution, widely distributed but expressed more abundantly in nonpigmented ciliary epithelial cells than in pigmented ones.

Its subcellular location is the cytoplasm. It localises to the cytosol. The protein localises to the nucleus. The protein resides in the cytoskeleton. Its function is as follows. Involved in both the assembly of spliceosomal snRNPs and the methylation of Sm proteins. Chaperone that regulates the assembly of spliceosomal U1, U2, U4 and U5 small nuclear ribonucleoproteins (snRNPs), the building blocks of the spliceosome, and thereby plays an important role in the splicing of cellular pre-mRNAs. Most spliceosomal snRNPs contain a common set of Sm proteins SNRPB, SNRPD1, SNRPD2, SNRPD3, SNRPE, SNRPF and SNRPG that assemble in a heptameric protein ring on the Sm site of the small nuclear RNA to form the core snRNP (Sm core). In the cytosol, the Sm proteins SNRPD1, SNRPD2, SNRPE, SNRPF and SNRPG are trapped in an inactive 6S pICln-Sm complex by the chaperone CLNS1A that controls the assembly of the core snRNP. Dissociation by the SMN complex of CLNS1A from the trapped Sm proteins and their transfer to an SMN-Sm complex triggers the assembly of core snRNPs and their transport to the nucleus. This is Methylosome subunit pICln (CLNS1A) from Oryctolagus cuniculus (Rabbit).